The primary structure comprises 294 residues: UDP-3-O-acyl-N-acetylglucosamine deacetylase (294 aa).

Zn(2+) contacts are provided by His-75, His-232, and Asp-236. The active-site Proton donor is His-259.

This sequence belongs to the LpxC family. Zn(2+) serves as cofactor.

It carries out the reaction a UDP-3-O-[(3R)-3-hydroxyacyl]-N-acetyl-alpha-D-glucosamine + H2O = a UDP-3-O-[(3R)-3-hydroxyacyl]-alpha-D-glucosamine + acetate. It functions in the pathway glycolipid biosynthesis; lipid IV(A) biosynthesis; lipid IV(A) from (3R)-3-hydroxytetradecanoyl-[acyl-carrier-protein] and UDP-N-acetyl-alpha-D-glucosamine: step 2/6. Catalyzes the hydrolysis of UDP-3-O-myristoyl-N-acetylglucosamine to form UDP-3-O-myristoylglucosamine and acetate, the committed step in lipid A biosynthesis. This chain is UDP-3-O-acyl-N-acetylglucosamine deacetylase, found in Campylobacter jejuni subsp. jejuni serotype O:2 (strain ATCC 700819 / NCTC 11168).